The following is a 681-amino-acid chain: Spermatogenesis-associated protein 21 (681 aa).

Basic and acidic residues predominate over residues 1-14 (MENRNTHTHPESKA). Disordered regions lie at residues 1–284 (MENR…ANSR) and 298–336 (EEATHRRTLKSRGLTARRSPKTVTSVSTSGPISSSVPTL). Composition is skewed to polar residues over residues 83–94 (QEPSARPRTTQD) and 159–173 (PSNSRSQPLKNNSPS). Residues 251–261 (PEERDTEKKEL) are compositionally biased toward basic and acidic residues. The segment covering 264–281 (GQKQRQQALSAAGTQGPA) has biased composition (polar residues). Positions 319–335 (TVTSVSTSGPISSSVPT) are enriched in low complexity. In terms of domain architecture, EF-hand spans 464 to 499 (FTPAQVEEALMSADVNGDGHVDFKDFLAVMTDTKRF). 5 residues coordinate Ca(2+): Asp477, Asn479, Asp481, His483, and Asp488. A disordered region spans residues 653–681 (LFFQPGQQGSREHSSDSRKWLSSMPARTH). The segment covering 662 to 671 (SREHSSDSRK) has biased composition (basic and acidic residues).

Its function is as follows. Involved in the differentiation of haploid spermatids. This chain is Spermatogenesis-associated protein 21 (Spata21), found in Mus musculus (Mouse).